We begin with the raw amino-acid sequence, 147 residues long: Large ribosomal subunit protein uL22c (147 aa).

Belongs to the universal ribosomal protein uL22 family. As to quaternary structure, part of the 50S ribosomal subunit.

The protein localises to the plastid. This protein binds specifically to 23S rRNA. Functionally, the globular domain of the protein is located near the polypeptide exit tunnel on the outside of the subunit, while an extended beta-hairpin is found that lines the wall of the exit tunnel in the center of the 70S ribosome. The chain is Large ribosomal subunit protein uL22c (rpl22) from Cuscuta obtusiflora (Peruvian dodder).